The following is a 419-amino-acid chain: GTPase Obg (419 aa).

In terms of domain architecture, Obg spans 1-158 (MHFVDEAFNE…FKIKTELKVL (158 aa)). One can recognise an OBG-type G domain in the interval 159–324 (ADIGLLGFPS…LKYKMSSFLQ (166 aa)). GTP is bound by residues 165 to 172 (GFPSVGKS), 190 to 194 (FTTIK), 211 to 214 (DLPG), 278 to 281 (NKMD), and 305 to 307 (SLV). 2 residues coordinate Mg(2+): Ser-172 and Thr-192. An OCT domain is found at 342-419 (TLTDNLKTIS…KICDRLFDFL (78 aa)).

The protein belongs to the TRAFAC class OBG-HflX-like GTPase superfamily. OBG GTPase family. In terms of assembly, monomer. Mg(2+) serves as cofactor.

The protein localises to the cytoplasm. An essential GTPase which binds GTP, GDP and possibly (p)ppGpp with moderate affinity, with high nucleotide exchange rates and a fairly low GTP hydrolysis rate. Plays a role in control of the cell cycle, stress response, ribosome biogenesis and in those bacteria that undergo differentiation, in morphogenesis control. The chain is GTPase Obg from Aster yellows witches'-broom phytoplasma (strain AYWB).